Reading from the N-terminus, the 215-residue chain is Large ribosomal subunit protein uL3 (215 aa).

The disordered stretch occupies residues 136–155; that stretch reads GVSISHRSHGSTGQRQDPGK. Glutamine 151 carries the N5-methylglutamine modification.

The protein belongs to the universal ribosomal protein uL3 family. Part of the 50S ribosomal subunit. Forms a cluster with proteins L14 and L19. In terms of processing, methylated by PrmB.

Its function is as follows. One of the primary rRNA binding proteins, it binds directly near the 3'-end of the 23S rRNA, where it nucleates assembly of the 50S subunit. The protein is Large ribosomal subunit protein uL3 of Rickettsia rickettsii (strain Iowa).